The primary structure comprises 518 residues: Bifunctional purine biosynthesis protein PurH (518 aa).

One can recognise an MGS-like domain in the interval Met-1 to Cys-144.

The protein belongs to the PurH family.

It catalyses the reaction (6R)-10-formyltetrahydrofolate + 5-amino-1-(5-phospho-beta-D-ribosyl)imidazole-4-carboxamide = 5-formamido-1-(5-phospho-D-ribosyl)imidazole-4-carboxamide + (6S)-5,6,7,8-tetrahydrofolate. The catalysed reaction is IMP + H2O = 5-formamido-1-(5-phospho-D-ribosyl)imidazole-4-carboxamide. It participates in purine metabolism; IMP biosynthesis via de novo pathway; 5-formamido-1-(5-phospho-D-ribosyl)imidazole-4-carboxamide from 5-amino-1-(5-phospho-D-ribosyl)imidazole-4-carboxamide (10-formyl THF route): step 1/1. Its pathway is purine metabolism; IMP biosynthesis via de novo pathway; IMP from 5-formamido-1-(5-phospho-D-ribosyl)imidazole-4-carboxamide: step 1/1. This Lactococcus lactis subsp. cremoris (strain MG1363) protein is Bifunctional purine biosynthesis protein PurH.